A 505-amino-acid chain; its full sequence is Cyclic AMP-dependent transcription factor ATF-2 (505 aa).

Positions 1–7 (MKFKLHV) match the Nuclear export signal 1 (N-NES) motif. The segment at 25–49 (FLCTAPGCGQRFTNEDHLAVHKHKH) adopts a C2H2-type zinc-finger fold. Thr52 bears the Phosphothreonine; by PKC/PRKCH mark. Ser62 carries the phosphoserine; by VRK1 modification. Thr69 bears the Phosphothreonine; by MAPK11 and MAPK14 mark. The residue at position 71 (Thr71) is a Phosphothreonine; by MAPK1, MAPK3, MAPK11, MAPK12, MAPK14 and PLK3. Thr73 carries the post-translational modification Phosphothreonine; by VRK1. Phosphoserine is present on residues Ser90 and Ser112. Position 116 is a phosphothreonine (Thr116). At Ser121 the chain carries Phosphoserine; by PKC/PRKCA and PKC/PRKCB. 2 disordered regions span residues 125 to 155 (EPSV…PLAQ) and 259 to 373 (PGIP…RQKR). Ser136 carries the phosphoserine modification. Positions 282–293 (LTQQHPPVTNGD) are enriched in polar residues. The tract at residues 296–299 (KGHG) is essential for its histone acetyltransferase activity. Residues 318-334 (PATSTTETPASPAHTTP) are compositionally biased toward low complexity. Ser328 is subject to Phosphoserine. Phosphoserine; by PKC/PRKCA and PKC/PRKCB is present on Ser340. A compositionally biased stretch (basic and acidic residues) spans 346–363 (AANEDPDEKRRKFLERNR). The bZIP domain occupies 352–415 (DEKRRKFLER…AQLKQLLLAH (64 aa)). The segment at 354-374 (KRRKFLERNRAAASRCRQKRK) is basic motif. At Lys357 the chain carries N6-acetyllysine. Position 367 is a phosphoserine; by PKC/PRKCA and PKC/PRKCB (Ser367). At Lys374 the chain carries N6-acetyllysine. Residues 380 to 408 (LEKKAEDLSSLNGQLQSEVTLLRNEVAQL) are leucine-zipper. Residues 405 to 414 (VAQLKQLLLA) carry the Nuclear export signal 2 (C-NES) motif. The disordered stretch occupies residues 425-472 (KKSGYHTADKDDSSEDISVPSSPHTEAIQHSSVSTSNGVSSTSKAEAV). A phosphoserine mark is found at Ser442 and Ser446. Residues 443–454 (VPSSPHTEAIQH) show a composition bias toward polar residues. Positions 455 to 467 (SSVSTSNGVSSTS) are enriched in low complexity. A phosphoserine; by ATM mark is found at Ser490 and Ser498.

It belongs to the bZIP family. ATF subfamily. Binds DNA as a dimer and can form a homodimer in the absence of DNA. Can form a heterodimer with JUN. Heterodimerization is essential for its transcriptional activity. Interacts with SMAD3 and SMAD4. Binds through its N-terminal region to UTF1 which acts as a coactivator of ATF2 transcriptional activity. Interacts with the HK1/VDAC1 complex. Interacts with NBN, MRE11, XPO1, KAT5 and CUL3. Phosphorylation of Thr-69 by MAPK14 and MAPK11, and at Thr-71 by MAPK1/ERK2, MAPK3/ERK1, MAPK11, MAPK12 and MAPK14 in response to external stimulus like insulin causes increased transcriptional activity. Phosphorylated by PLK3 following hyperosmotic stress. Also phosphorylated and activated by JNK and CaMK4. ATM-mediated phosphorylation at Ser-490 and Ser-498 stimulates its function in DNA damage response. Phosphorylation at Ser-62, Thr-73 and Ser-121 activates its transcriptional activity. Phosphorylation at Thr-69 or Thr-71 enhances acetylation of histones H2B and H4. Ubiquitously expressed, with more abundant expression in the brain.

The protein resides in the nucleus. It localises to the cytoplasm. It is found in the mitochondrion outer membrane. Its function is as follows. Transcriptional activator which regulates the transcription of various genes, including those involved in anti-apoptosis, cell growth, and DNA damage response. Dependent on its binding partner, binds to CRE (cAMP response element) consensus sequences (5'-TGACGTCA-3') or to AP-1 (activator protein 1) consensus sequences (5'-TGACTCA-3'). In the nucleus, contributes to global transcription and the DNA damage response, in addition to specific transcriptional activities that are related to cell development, proliferation and death. In the cytoplasm, interacts with and perturbs HK1- and VDAC1-containing complexes at the mitochondrial outer membrane, thereby impairing mitochondrial membrane potential, inducing mitochondrial leakage and promoting cell death. The phosphorylated form (mediated by ATM) plays a role in the DNA damage response and is involved in the ionizing radiation (IR)-induced S phase checkpoint control and in the recruitment of the MRN complex into the IR-induced foci (IRIF). Exhibits histone acetyltransferase (HAT) activity which specifically acetylates histones H2B and H4 in vitro. In concert with CUL3 and RBX1, promotes the degradation of KAT5 thereby attenuating its ability to acetylate and activate ATM. Can elicit oncogenic or tumor suppressor activities depending on the tissue or cell type. The chain is Cyclic AMP-dependent transcription factor ATF-2 (ATF2) from Homo sapiens (Human).